The primary structure comprises 216 residues: Probable RNA 2'-phosphotransferase 1 (216 aa).

Belongs to the KptA/TPT1 family.

Its function is as follows. Removes the 2'-phosphate from RNA via an intermediate in which the phosphate is ADP-ribosylated by NAD followed by a presumed transesterification to release the RNA and generate ADP-ribose 1''-2''-cyclic phosphate (APPR&gt;P). May function as an ADP-ribosylase. This chain is Probable RNA 2'-phosphotransferase 1 (kptA1), found in Archaeoglobus fulgidus (strain ATCC 49558 / DSM 4304 / JCM 9628 / NBRC 100126 / VC-16).